Consider the following 209-residue polypeptide: Thiamine-phosphate synthase (209 aa).

4-amino-2-methyl-5-(diphosphooxymethyl)pyrimidine is bound by residues 41 to 45 and Asn-73; that span reads QYRNK. Mg(2+)-binding residues include Asp-74 and Asp-93. Ser-112 contributes to the 4-amino-2-methyl-5-(diphosphooxymethyl)pyrimidine binding site. 139-141 provides a ligand contact to 2-[(2R,5Z)-2-carboxy-4-methylthiazol-5(2H)-ylidene]ethyl phosphate; sequence SST. A 4-amino-2-methyl-5-(diphosphooxymethyl)pyrimidine-binding site is contributed by Lys-142. Gly-168 is a 2-[(2R,5Z)-2-carboxy-4-methylthiazol-5(2H)-ylidene]ethyl phosphate binding site.

The protein belongs to the thiamine-phosphate synthase family. It depends on Mg(2+) as a cofactor.

The catalysed reaction is 2-[(2R,5Z)-2-carboxy-4-methylthiazol-5(2H)-ylidene]ethyl phosphate + 4-amino-2-methyl-5-(diphosphooxymethyl)pyrimidine + 2 H(+) = thiamine phosphate + CO2 + diphosphate. The enzyme catalyses 2-(2-carboxy-4-methylthiazol-5-yl)ethyl phosphate + 4-amino-2-methyl-5-(diphosphooxymethyl)pyrimidine + 2 H(+) = thiamine phosphate + CO2 + diphosphate. It carries out the reaction 4-methyl-5-(2-phosphooxyethyl)-thiazole + 4-amino-2-methyl-5-(diphosphooxymethyl)pyrimidine + H(+) = thiamine phosphate + diphosphate. The protein operates within cofactor biosynthesis; thiamine diphosphate biosynthesis; thiamine phosphate from 4-amino-2-methyl-5-diphosphomethylpyrimidine and 4-methyl-5-(2-phosphoethyl)-thiazole: step 1/1. Functionally, condenses 4-methyl-5-(beta-hydroxyethyl)thiazole monophosphate (THZ-P) and 2-methyl-4-amino-5-hydroxymethyl pyrimidine pyrophosphate (HMP-PP) to form thiamine monophosphate (TMP). The sequence is that of Thiamine-phosphate synthase from Methylobacillus flagellatus (strain ATCC 51484 / DSM 6875 / VKM B-1610 / KT).